Reading from the N-terminus, the 328-residue chain is UPF0285 protein MJ1370 (328 aa).

Belongs to the UPF0285 family.

The protein is UPF0285 protein MJ1370 of Methanocaldococcus jannaschii (strain ATCC 43067 / DSM 2661 / JAL-1 / JCM 10045 / NBRC 100440) (Methanococcus jannaschii).